The primary structure comprises 423 residues: Histidine--tRNA ligase (423 aa).

It belongs to the class-II aminoacyl-tRNA synthetase family. Homodimer.

It localises to the cytoplasm. It carries out the reaction tRNA(His) + L-histidine + ATP = L-histidyl-tRNA(His) + AMP + diphosphate + H(+). The sequence is that of Histidine--tRNA ligase from Desulfosudis oleivorans (strain DSM 6200 / JCM 39069 / Hxd3) (Desulfococcus oleovorans).